The primary structure comprises 869 residues: Synaptonemal complex protein ZEP1 (869 aa).

3 coiled-coil regions span residues threonine 64–threonine 298, histidine 330–tyrosine 614, and arginine 641–methionine 713. The disordered stretch occupies residues glycine 841–glycine 869.

As to quaternary structure, interacts with CRC1. As to expression, highly expressed in panicles.

The protein resides in the nucleus. Its subcellular location is the chromosome. Required for chromosome synapsis and regulates crossover frequency during meiosis. Acts as a transverse filament protein and constitutes the central element of the synaptonemal complex. In Oryza sativa subsp. japonica (Rice), this protein is Synaptonemal complex protein ZEP1 (ZEP1).